The primary structure comprises 539 residues: Serine/threonine-protein kinase BUR1 (539 aa).

Residues 1–15 are compositionally biased toward polar residues; that stretch reads MEKLSETTPNGTSPR. The disordered stretch occupies residues 1-27; sequence MEKLSETTPNGTSPRTFALNHSRPRSS. The 303-residue stretch at 37–339 folds into the Protein kinase domain; the sequence is YELLGKLGEG…AVDALQHPWF (303 aa). ATP is bound by residues 43 to 51 and Lys66; that span reads LGEGTFGEV. Asp169 serves as the catalytic Proton acceptor. A disordered region spans residues 370–539; it reads AALPPAPKGG…DRPDHNGYRR (170 aa). Composition is skewed to basic and acidic residues over residues 414 to 428, 471 to 514, and 521 to 539; these read NGPDDRRPAWQRERG, NRDD…DRGT, and PRHDRSRDRDRPDHNGYRR.

Belongs to the protein kinase superfamily. CMGC Ser/Thr protein kinase family. CDC2/CDKX subfamily.

Its subcellular location is the nucleus. The catalysed reaction is L-seryl-[protein] + ATP = O-phospho-L-seryl-[protein] + ADP + H(+). It carries out the reaction L-threonyl-[protein] + ATP = O-phospho-L-threonyl-[protein] + ADP + H(+). The enzyme catalyses [DNA-directed RNA polymerase] + ATP = phospho-[DNA-directed RNA polymerase] + ADP + H(+). Its function is as follows. Serine/threonine-protein kinase involved in transcription regulation. Phosphorylates the UBC2/RAD6 ubiquitin-conjugating enzyme (E2), leading to monoubiquitination of histone H2B and the silencing of telomeric-associated genes. Also required for histone H3 methylation. Necessary for the recovery from pheromone-induced growth arrest in the cell cycle G1 phase. This Gibberella zeae (strain ATCC MYA-4620 / CBS 123657 / FGSC 9075 / NRRL 31084 / PH-1) (Wheat head blight fungus) protein is Serine/threonine-protein kinase BUR1 (BUR1).